The sequence spans 310 residues: Syntaxin-related protein KNOLLE (310 aa).

The residue at position 1 (Met1) is an N-acetylmethionine. Residues Met1–Lys283 lie on the Cytoplasmic side of the membrane. The stretch at Asn94–Ser159 forms a coiled coil. Positions Val212–Ala274 constitute a t-SNARE coiled-coil homology domain. A helical; Anchor for type IV membrane protein transmembrane segment spans residues Trp284–Ile304. Topologically, residues Thr305–Ser310 are vesicular.

It belongs to the syntaxin family. Interacts with SNAP33 and/or NPSN11 to form a t-SNARE complex and with KEULE. As to expression, abundant in flowers and developing siliques. A low level expression is seen in the seedlings, roots, and leaves.

Its subcellular location is the membrane. Its function is as follows. Involved in cytokinesis. Acts as a cell plate-specific syntaxin, required for the fusion of vesicles at the plane of cell division. The protein is Syntaxin-related protein KNOLLE (KN) of Arabidopsis thaliana (Mouse-ear cress).